Here is a 256-residue protein sequence, read N- to C-terminus: Adenylate kinase (256 aa).

45-50 (GAGKGT) contributes to the ATP binding site. The interval 67 to 96 (ATGDLLRQQVAMGTDLGKQAKKIMDQGALV) is NMP. Residues T68, R73, 94-96 (ALV), 123-126 (GFPR), and Q130 contribute to the AMP site. Residues 164–201 (GRLIHPGSGRSYHKIFSPPKQPMKDDITGEPLVQRSDD) form an LID region. ATP-binding positions include R165 and 174–175 (SY). Positions 198 and 209 each coordinate AMP. Q237 is an ATP binding site.

This sequence belongs to the adenylate kinase family. AK2 subfamily. Monomer.

It localises to the cytoplasm. It is found in the cytosol. Its subcellular location is the mitochondrion intermembrane space. The enzyme catalyses AMP + ATP = 2 ADP. In terms of biological role, catalyzes the reversible transfer of the terminal phosphate group between ATP and AMP. Plays an important role in cellular energy homeostasis and in adenine nucleotide metabolism. Adenylate kinase activity is critical for regulation of the phosphate utilization and the AMP de novo biosynthesis pathways. In Malassezia globosa (strain ATCC MYA-4612 / CBS 7966) (Dandruff-associated fungus), this protein is Adenylate kinase.